The following is a 108-amino-acid chain: Translation initiation factor 1A (108 aa).

One can recognise an S1-like domain in the interval 11–85 (PSKDVPKPEE…TKADIVYRYM (75 aa)).

Belongs to the eIF-1A family.

In terms of biological role, seems to be required for maximal rate of protein biosynthesis. Enhances ribosome dissociation into subunits and stabilizes the binding of the initiator Met-tRNA(I) to 40 S ribosomal subunits. The sequence is that of Translation initiation factor 1A (eIF1A) from Metallosphaera sedula (strain ATCC 51363 / DSM 5348 / JCM 9185 / NBRC 15509 / TH2).